The primary structure comprises 107 residues: Thioredoxin (107 aa).

A Thioredoxin domain is found at 2–107 (VVHIENLNAF…TLKQKINDHK (106 aa)). Catalysis depends on nucleophile residues C32 and C35. A disulfide bridge links C32 with C35. 2 positions are modified to S-nitrosocysteine: C71 and C75.

This sequence belongs to the thioredoxin family. Post-translationally, may be nitrosylated on several cysteine residues, depending on the oxidation state. Nitrosylated Cys-75 may serve as donor for nitrosylation of target proteins.

It is found in the nucleus. The protein localises to the cytoplasm. Its subcellular location is the secreted. Participates in various redox reactions through the reversible oxidation of its active center dithiol to a disulfide and catalyzes dithiol-disulfide exchange reactions. Plays a role in the reversible S-nitrosylation of cysteine residues in target proteins, and thereby contributes to the response to intracellular nitric oxide. Nitrosylates the active site Cys of CASP3 in response to nitric oxide (NO), and thereby inhibits caspase-3 activity. Induces the FOS/JUN AP-1 DNA binding activity in ionizing radiation (IR) cells through its oxidation/reduction status and stimulates AP-1 transcriptional activity. The protein is Thioredoxin (txn) of Ictalurus punctatus (Channel catfish).